The following is a 55-amino-acid chain: uncharacterized protein (55 aa).

This is an uncharacterized protein from Acidianus hospitalis (AFV-1).